Reading from the N-terminus, the 125-residue chain is MACPSLACCLLGLLALTSACYIQNCPLGGKRAALDLDMRKCLPCGPGGKGRCFGPSICCADELGCFVGTAEALRCQEENYLPSPCQSGQKPCGSGGRCATAGICCSPDGCRTDPACDPESAFSER.

The signal sequence occupies residues 1-19 (MACPSLACCLLGLLALTSA). A disulfide bridge links cysteine 20 with cysteine 25. Glycine 28 is modified (glycine amide). 7 disulfides stabilise this stretch: cysteine 41/cysteine 85, cysteine 44/cysteine 58, cysteine 52/cysteine 75, cysteine 59/cysteine 65, cysteine 92/cysteine 104, cysteine 98/cysteine 116, and cysteine 105/cysteine 110.

It belongs to the vasopressin/oxytocin family. As to quaternary structure, interacts with oxytocin receptor (Ki=1.5 nM). Interacts with vasopressin V1aR/AVPR1A (Ki=37 nM), V1bR/AVPR1B (Ki=222 nM), and V2R/AVPR2 receptors (Ki=823 nM).

Functionally, neurophysin 1 specifically binds oxytocin. In terms of biological role, oxytocin causes contraction of the smooth muscle of the uterus and of the mammary gland. Acts by binding to oxytocin receptor (OXTR). This chain is Oxytocin-neurophysin 1 (Oxt), found in Rattus norvegicus (Rat).